The chain runs to 452 residues: Pup--protein ligase (452 aa).

Residue Glu-9 coordinates Mg(2+). Position 53 (Arg-53) interacts with ATP. Tyr-55 lines the Mg(2+) pocket. Asp-57 (proton acceptor) is an active-site residue. Residue Glu-63 coordinates Mg(2+). Residues Thr-66 and Trp-419 each contribute to the ATP site.

This sequence belongs to the Pup ligase/Pup deamidase family. Pup-conjugating enzyme subfamily.

It catalyses the reaction ATP + [prokaryotic ubiquitin-like protein]-L-glutamate + [protein]-L-lysine = ADP + phosphate + N(6)-([prokaryotic ubiquitin-like protein]-gamma-L-glutamyl)-[protein]-L-lysine.. The protein operates within protein degradation; proteasomal Pup-dependent pathway. It functions in the pathway protein modification; protein pupylation. Catalyzes the covalent attachment of the prokaryotic ubiquitin-like protein modifier Pup to the proteasomal substrate proteins, thereby targeting them for proteasomal degradation. This tagging system is termed pupylation. The ligation reaction involves the side-chain carboxylate of the C-terminal glutamate of Pup and the side-chain amino group of a substrate lysine. In Mycobacteroides abscessus (strain ATCC 19977 / DSM 44196 / CCUG 20993 / CIP 104536 / JCM 13569 / NCTC 13031 / TMC 1543 / L948) (Mycobacterium abscessus), this protein is Pup--protein ligase.